The chain runs to 186 residues: Ribosome-recycling factor (186 aa).

Belongs to the RRF family.

The protein resides in the cytoplasm. Responsible for the release of ribosomes from messenger RNA at the termination of protein biosynthesis. May increase the efficiency of translation by recycling ribosomes from one round of translation to another. In Ralstonia nicotianae (strain ATCC BAA-1114 / GMI1000) (Ralstonia solanacearum), this protein is Ribosome-recycling factor.